The primary structure comprises 289 residues: 4-hydroxy-3-methylbut-2-enyl diphosphate reductase (289 aa).

Cysteine 13 is a binding site for [4Fe-4S] cluster. (2E)-4-hydroxy-3-methylbut-2-enyl diphosphate contacts are provided by histidine 41 and histidine 75. Residues histidine 41 and histidine 75 each coordinate dimethylallyl diphosphate. 2 residues coordinate isopentenyl diphosphate: histidine 41 and histidine 75. Cysteine 97 serves as a coordination point for [4Fe-4S] cluster. A (2E)-4-hydroxy-3-methylbut-2-enyl diphosphate-binding site is contributed by histidine 129. Position 129 (histidine 129) interacts with dimethylallyl diphosphate. An isopentenyl diphosphate-binding site is contributed by histidine 129. The Proton donor role is filled by glutamate 131. Threonine 167 provides a ligand contact to (2E)-4-hydroxy-3-methylbut-2-enyl diphosphate. Residue cysteine 198 participates in [4Fe-4S] cluster binding. The (2E)-4-hydroxy-3-methylbut-2-enyl diphosphate site is built by serine 226, serine 227, asparagine 228, and serine 270. Residues serine 226, serine 227, asparagine 228, and serine 270 each coordinate dimethylallyl diphosphate. The isopentenyl diphosphate site is built by serine 226, serine 227, asparagine 228, and serine 270.

Belongs to the IspH family. The cofactor is [4Fe-4S] cluster.

It carries out the reaction isopentenyl diphosphate + 2 oxidized [2Fe-2S]-[ferredoxin] + H2O = (2E)-4-hydroxy-3-methylbut-2-enyl diphosphate + 2 reduced [2Fe-2S]-[ferredoxin] + 2 H(+). The catalysed reaction is dimethylallyl diphosphate + 2 oxidized [2Fe-2S]-[ferredoxin] + H2O = (2E)-4-hydroxy-3-methylbut-2-enyl diphosphate + 2 reduced [2Fe-2S]-[ferredoxin] + 2 H(+). The protein operates within isoprenoid biosynthesis; dimethylallyl diphosphate biosynthesis; dimethylallyl diphosphate from (2E)-4-hydroxy-3-methylbutenyl diphosphate: step 1/1. Its pathway is isoprenoid biosynthesis; isopentenyl diphosphate biosynthesis via DXP pathway; isopentenyl diphosphate from 1-deoxy-D-xylulose 5-phosphate: step 6/6. Functionally, catalyzes the conversion of 1-hydroxy-2-methyl-2-(E)-butenyl 4-diphosphate (HMBPP) into a mixture of isopentenyl diphosphate (IPP) and dimethylallyl diphosphate (DMAPP). Acts in the terminal step of the DOXP/MEP pathway for isoprenoid precursor biosynthesis. In Bacteroides thetaiotaomicron (strain ATCC 29148 / DSM 2079 / JCM 5827 / CCUG 10774 / NCTC 10582 / VPI-5482 / E50), this protein is 4-hydroxy-3-methylbut-2-enyl diphosphate reductase.